The primary structure comprises 191 residues: Guanylate kinase (191 aa).

The Guanylate kinase-like domain occupies 9 to 187 (GQLIVITGPS…SLIALETAIF (179 aa)). 16 to 23 (GPSGVGKG) contributes to the ATP binding site.

It belongs to the guanylate kinase family.

It localises to the cytoplasm. The catalysed reaction is GMP + ATP = GDP + ADP. Its function is as follows. Essential for recycling GMP and indirectly, cGMP. This is Guanylate kinase from Thermosynechococcus vestitus (strain NIES-2133 / IAM M-273 / BP-1).